The chain runs to 158 residues: NADH-quinone oxidoreductase subunit B (158 aa).

[4Fe-4S] cluster-binding residues include C37, C38, C102, and C132.

It belongs to the complex I 20 kDa subunit family. As to quaternary structure, NDH-1 is composed of 14 different subunits. Subunits NuoB, C, D, E, F, and G constitute the peripheral sector of the complex. [4Fe-4S] cluster serves as cofactor.

It is found in the cell inner membrane. The enzyme catalyses a quinone + NADH + 5 H(+)(in) = a quinol + NAD(+) + 4 H(+)(out). Functionally, NDH-1 shuttles electrons from NADH, via FMN and iron-sulfur (Fe-S) centers, to quinones in the respiratory chain. Couples the redox reaction to proton translocation (for every two electrons transferred, four hydrogen ions are translocated across the cytoplasmic membrane), and thus conserves the redox energy in a proton gradient. In Methylobacillus flagellatus (strain ATCC 51484 / DSM 6875 / VKM B-1610 / KT), this protein is NADH-quinone oxidoreductase subunit B.